A 241-amino-acid chain; its full sequence is Small ribosomal subunit protein uS3 (241 aa).

The region spanning 39-108 is the KH type-2 domain; that stretch reads IREGVLKLLK…NLKVEVKVIE (70 aa). A disordered region spans residues 215–241; it reads SQRVSEKAPMNNDRRFNNKNNNRGGRK. The span at 232 to 241 shows a compositional bias: low complexity; it reads NKNNNRGGRK.

It belongs to the universal ribosomal protein uS3 family. Part of the 30S ribosomal subunit. Forms a tight complex with proteins S10 and S14.

In terms of biological role, binds the lower part of the 30S subunit head. Binds mRNA in the 70S ribosome, positioning it for translation. In Mesoplasma florum (strain ATCC 33453 / NBRC 100688 / NCTC 11704 / L1) (Acholeplasma florum), this protein is Small ribosomal subunit protein uS3.